The primary structure comprises 389 residues: Mating-type protein MAT-1 (389 aa).

The segment at residues 70-127 (KAKKALNAFVGFRCYYISIPHFKSWPMKKLSNLIGLLWETDPNKSLWSLMTKAWSAIR) is a DNA-binding region (alpha box).

This sequence belongs to the MATALPHA1 family.

The protein localises to the nucleus. In terms of biological role, mating type proteins are sequence specific DNA-binding proteins that act as master switches in fungal differentiation by controlling gene expression in a cell type-specific fashion. Transcriptional activator that induces the transcription of alpha-specific genes. The protein is Mating-type protein MAT-1 (MAT1) of Alternaria alternata (Alternaria rot fungus).